Reading from the N-terminus, the 503-residue chain is Probable cytosol aminopeptidase (503 aa).

The Mn(2+) site is built by Lys-274 and Asp-279. Lys-286 is an active-site residue. Positions 297, 356, and 358 each coordinate Mn(2+). Residue Arg-360 is part of the active site.

It belongs to the peptidase M17 family. Mn(2+) serves as cofactor.

It localises to the cytoplasm. It catalyses the reaction Release of an N-terminal amino acid, Xaa-|-Yaa-, in which Xaa is preferably Leu, but may be other amino acids including Pro although not Arg or Lys, and Yaa may be Pro. Amino acid amides and methyl esters are also readily hydrolyzed, but rates on arylamides are exceedingly low.. The enzyme catalyses Release of an N-terminal amino acid, preferentially leucine, but not glutamic or aspartic acids.. Presumably involved in the processing and regular turnover of intracellular proteins. Catalyzes the removal of unsubstituted N-terminal amino acids from various peptides. The chain is Probable cytosol aminopeptidase from Burkholderia ambifaria (strain MC40-6).